A 644-amino-acid chain; its full sequence is Exoribonuclease 2 (644 aa).

An RNB domain is found at 189-516 (RQDLTALNFV…NHRLLKAVIK (328 aa)). The S1 motif domain maps to 561–643 (NTRFAAEIID…ETRSIIARPA (83 aa)).

This sequence belongs to the RNR ribonuclease family. RNase II subfamily.

The protein resides in the cytoplasm. The catalysed reaction is Exonucleolytic cleavage in the 3'- to 5'-direction to yield nucleoside 5'-phosphates.. In terms of biological role, involved in mRNA degradation. Hydrolyzes single-stranded polyribonucleotides processively in the 3' to 5' direction. The chain is Exoribonuclease 2 from Salmonella newport (strain SL254).